Reading from the N-terminus, the 336-residue chain is Syntaxin-31 (336 aa).

Over 1–314 (MGSTFRDRTV…QHLTRISSNR (314 aa)) the chain is Cytoplasmic. 2 disordered regions span residues 23 to 53 (GAIP…KASR) and 152 to 218 (RSEN…SQLR). Positions 154-163 (ENMKAHENRK) are enriched in basic and acidic residues. Over residues 164 to 181 (QLFSTKNAVDSPPQNNAK) the composition is skewed to polar residues. Residues 190–202 (SSSSNPFGNLQQP) show a composition bias toward low complexity. The 63-residue stretch at 244–306 (ENYSQSRAVA…EGARSALLQH (63 aa)) folds into the t-SNARE coiled-coil homology domain. A helical; Anchor for type IV membrane protein transmembrane segment spans residues 315–335 (WLMMKIFAVIILFLIVFLFFV). A336 is a topological domain (vesicular).

Belongs to the syntaxin family. As to quaternary structure, part of the t-SNARE complex. Interacts with CDC48A, but not with VPS45.

The protein resides in the golgi apparatus. It is found in the cis-Golgi network membrane. Its subcellular location is the cytoplasm. The protein localises to the endosome. Its function is as follows. Vesicle trafficking protein that functions in the secretory pathway. The chain is Syntaxin-31 (SYP31) from Arabidopsis thaliana (Mouse-ear cress).